The primary structure comprises 2183 residues: DNA polymerase epsilon catalytic subunit A (2183 aa).

Zn(2+)-binding residues include Cys2066, Cys2069, Cys2090, and Cys2093. A CysA-type zinc finger spans residues 2066-2093 (CFKCKNPCDLDLCKDSCCTKSGFRCPLC). Cys2124, Cys2127, Cys2139, and Cys2141 together coordinate [4Fe-4S] cluster. The CysB motif signature appears at 2124 to 2141 (CDKCRRVKEYELTEFCPC).

It belongs to the DNA polymerase type-B family. As to quaternary structure, heterotetramer. Consists of 4 subunits: POL2, DPB2, DPB3 and DPB4. Requires [4Fe-4S] cluster as cofactor.

The protein localises to the nucleus. The enzyme catalyses DNA(n) + a 2'-deoxyribonucleoside 5'-triphosphate = DNA(n+1) + diphosphate. Its function is as follows. DNA polymerase II participates in chromosomal DNA replication. The chain is DNA polymerase epsilon catalytic subunit A (POL2) from Yarrowia lipolytica (strain CLIB 122 / E 150) (Yeast).